Here is a 947-residue protein sequence, read N- to C-terminus: MENPFASREKGFGNYSDFPTEQMDGLSSNFGSGVRNLISDDMFNPSSELMNFDSLAAWCNSPSATDILFAQYGLSNSQPMPFGAFTSFHVADPKATSLTRSFYDLESSYYGEERSSAQEMNSQFHRSSDSDELSGKRRKVVNQKIGFPNVLNCTIPRSLSHSLDEKMLKALSLFMESSGSGEGILAQVWTPIKTGDQYLLSTCDQAYLLDPRFSQYREVSRRFTFAAEANQCSFPGLPGRVFISGVPEWTSNVMYYKTDEYLRMKHAIDNEVRGSIAIPILEASGTSCCAVMELVTSKEKPNFDMEMDSVCRALQAVNLRTAAIPRPQYLSSSQRDALAEIQDVLRTVCHAHKLPLALAWIPCRKDQSIRVSGQKSGENCILCIEETACYVNDMEMEGFVHACLEHCLREKEGIVGKAFISNQPFFSSDVKAYDISEYPIVQHARKYGLNAAVAIKLRSTYTGEDDYILELFLPVSMKGSLEQQLLLDSLSGTMQRICRTLRTVSEVGSTKKEGTKPGFRSSDMSNFPQTTSSENFQTISLDSEFNSTRSMFSGMSSDKENSITVSQGTLEQDVSKARTPEKKKSTTEKNVSLSALQQHFSGSLKDAAKSLGGETSAYFQAWVYFFCPTTLKRICRQHGIMRWPSRKINKVNRSLRKIQTVLDSVQGVEGGLKFDSATGEFIAVRPFIQEIDTQKGLSSLDNDAHARRSQEDMPDDTSFKLQEAKSVDNAIKLEEDTTMNQARPGSFMEVNASGQPWAWMAKESGLNGSEGIKSVCNLSSVEISDGMDPTIRCSGSIVEPNQSMSCSISDSSNGSGAVLRGSSSTSMEDWNQMRTHNSNSSESGSTTLIVKASYREDTVRFKFEPSVGCPQLYKEVGKRFKLQDGSFQLKYLDDEEEWVMLVTDSDLQECLEILHGMGKHSVKFLVRDLSAPLGSSGGSNGYLGTGL.

3 disordered regions span residues 114-135, 509-533, and 550-591; these read RSSAQEMNSQFHRSSDSDELSG, STKKEGTKPGFRSSDMSNFPQTTSS, and SMFS…EKNV. Residues 126–135 show a composition bias toward basic and acidic residues; that stretch reads RSSDSDELSG. 2 stretches are compositionally biased toward polar residues: residues 522–533 and 550–572; these read SDMSNFPQTTSS and SMFSGMSSDKENSITVSQGTLEQ. Basic and acidic residues predominate over residues 573 to 587; it reads DVSKARTPEKKKSTT. The region spanning 577–671 is the RWP-RK domain; the sequence is ARTPEKKKST…LDSVQGVEGG (95 aa). A coiled-coil region spans residues 646-666; the sequence is RKINKVNRSLRKIQTVLDSVQ. Residues 805–815 are compositionally biased toward low complexity; sequence SCSISDSSNGS. Residues 805 to 828 are disordered; sequence SCSISDSSNGSGAVLRGSSSTSME. One can recognise a PB1 domain in the interval 847-929; the sequence is TLIVKASYRE…HSVKFLVRDL (83 aa).

It localises to the nucleus. Its function is as follows. Probable transcription factor. This is Protein NLP8 (NLP8) from Arabidopsis thaliana (Mouse-ear cress).